A 159-amino-acid polypeptide reads, in one-letter code: Ribosome maturation factor RimP (159 aa).

It belongs to the RimP family.

It is found in the cytoplasm. In terms of biological role, required for maturation of 30S ribosomal subunits. This chain is Ribosome maturation factor RimP, found in Geotalea daltonii (strain DSM 22248 / JCM 15807 / FRC-32) (Geobacter daltonii).